The primary structure comprises 153 residues: Deoxyuridine 5'-triphosphate nucleotidohydrolase (153 aa).

Substrate contacts are provided by residues 71–73 (RSG), Asn84, 88–90 (TID), and Lys98.

This sequence belongs to the dUTPase family. Requires Mg(2+) as cofactor.

The enzyme catalyses dUTP + H2O = dUMP + diphosphate + H(+). It functions in the pathway pyrimidine metabolism; dUMP biosynthesis; dUMP from dCTP (dUTP route): step 2/2. In terms of biological role, this enzyme is involved in nucleotide metabolism: it produces dUMP, the immediate precursor of thymidine nucleotides and it decreases the intracellular concentration of dUTP so that uracil cannot be incorporated into DNA. This chain is Deoxyuridine 5'-triphosphate nucleotidohydrolase, found in Wolbachia pipientis wMel.